We begin with the raw amino-acid sequence, 416 residues long: Gasdermin-B (416 aa).

The tract at residues 1-280 (MFSVFEEITR…EKRKDVLNSL (280 aa)) is triggers pyroptosis. The next 2 beta stranded transmembrane spans lie at 83–101 (EFQILDNVDSTGELIVRLP) and 102–125 (KEITISGSFQGFHHQKIKISENRI). Residues lysine 166, lysine 177, lysine 190, and lysine 192 each participate in a (Microbial infection) Glycyl lysine isopeptide (Lys-Gly) (interchain with G-Cter in ubiquitin) cross-link. 2 beta stranded membrane passes run 167–183 (EETLKSDRQYKFWSQIS) and 184–198 (QGHLSYKHKGQREVT). Residues 229-250 (KSFPEEKDGASSCLGKSLGSED) form a disordered region. A coiled-coil region spans residues 248–276 (SEDSRNMKEKLEDMESVLKDLTEEKRKDV). Methionine 308 participates in a covalent cross-link: (Microbial infection) Glycyl lysine isopeptide (Lys-Gly) (interchain with G-Cter in ubiquitin).

Belongs to the gasdermin family. In terms of assembly, homooligomer; homooligomeric ring-shaped pore complex containing 24-26 subunits when inserted in the membrane. Cleavage by granzyme A (GZMA) relieves autoinhibition by releasing the N-terminal moiety (Gasdermin-B, N-terminal) that initiates pyroptosis. Not cleaved by other granzymes. Major cleavage site takes places after Lys-244; a minor cleavage site takes place after Lys-229. Cleavage by neutrophil elastase ELANE, inhibits its ability to trigger pyroptosis. Post-translationally, palmitoylated. In terms of processing, (Microbial infection) Ubiquitinated by S.flexneri IpaH7.8, leading to its degradation by the proteasome, thereby preventing its ability to form pores in bacterial-derived membranes. As to expression, in the gastrointestinal tract, expressed in proliferating cells, including in the basal cell layer of esophagus and in isthmus/neck of stomach.

The protein resides in the cytoplasm. It localises to the cell membrane. The full-length protein before cleavage is inactive: intramolecular interactions between N- and C-terminal domains mediate autoinhibition in the absence of activation signal. The intrinsic pyroptosis-inducing activity is carried by the released N-terminal moiety (Gasdermin-B, N-terminal) following cleavage by granzyme A (GZMA). Functionally, precursor of a pore-forming protein that acts as a downstream mediator of granzyme-mediated cell death. This form constitutes the precursor of the pore-forming protein: upon cleavage, the released N-terminal moiety (Gasdermin-B, N-terminal) binds to membranes and forms pores, triggering pyroptosis. Also acts as a regulator of epithelial cell repair independently of programmed cell death: translocates to the plasma membrane and promotes epithelial maintenance and repair by regulating PTK2/FAK-mediated phosphorylation of PDGFA. Pore-forming protein produced by cleavage by granzyme A (GZMA), which causes membrane permeabilization and pyroptosis in target cells of cytotoxic T and natural killer (NK) cells. Key downstream mediator of granzyme-mediated cell death: (1) granzyme A (GZMA), delivered to target cells from cytotoxic T- and NK-cells, (2) specifically cleaves Gasdermin-B to generate this form. After cleavage, moves to the plasma membrane, homooligomerizes within the membrane and forms pores of 10-15 nanometers (nm) of inner diameter, triggering pyroptosis. The different isoforms recognize and bind different phospholipids on membranes, promoting cell death of different target cells. Its function is as follows. Precursor of a pore-forming protein that acts as a downstream mediator of granzyme-mediated cell death and mediates pyroptosis. Following cleavage and activation by granzyme A (GZMA), the N-terminal part binds to membrane inner leaflet lipids, homooligomerizes within the human plasma membrane and forms pores of 10-15 nanometers (nm) of inner diameter, triggering pyroptosis. Recognizes and binds membrane inner leaflet lipids of human cells, such as phosphatidylinositol 4-phosphate, phosphatidylinositol 5-phosphate, bisphosphorylated phosphatidylinositols, such as phosphatidylinositol (4,5)-bisphosphate, and more weakly to phosphatidic acid. Also binds sufatide, a component of the apical membrane of epithelial cells. In terms of biological role, precursor of a pore-forming protein that acts as a downstream mediator of granzyme-mediated cell death and mediates pyroptosis of human cells. Following cleavage and activation by granzyme A (GZMA), the N-terminal part binds to membrane inner leaflet lipids, homooligomerizes within the human plasma membrane and forms pores of 10-15 nanometers (nm) of inner diameter, triggering pyroptosis. Functionally, precursor of a pore-forming protein that acts as a downstream mediator of granzyme-mediated cell death and specifically mediates cell death of Gram-negative bacteria in response to infection. Following cleavage and activation by granzyme A (GZMA), the N-terminal part recognizes and binds phospholipids found on Gram-negative bacterial membranes, such as lipid A and cariolipin, homooligomerizes within the bacterial membranes and forms pores, triggering pyroptosis followed by cell death. In contrast to isoform 4, does not bind to membrane inner leaflet lipids of host human cell, such as phosphatidylinositol 4-phosphate, phosphatidylinositol 5-phosphate, bisphosphorylated phosphatidylinositols, such as phosphatidylinositol (4,5)-bisphosphate. Not able to trigger pyroptosis. This Homo sapiens (Human) protein is Gasdermin-B.